Consider the following 324-residue polypeptide: Heparan sulfate 2-O-sulfotransferase hst-2 (324 aa).

Over 1–6 the chain is Cytoplasmic; it reads MLWKKR. A helical; Signal-anchor for type II membrane protein membrane pass occupies residues 7-24; it reads KVLYFAGISVFILILLLL. Residues 25–324 are Lumenal-facing; that stretch reads KLNSKPKANV…QYHFEKIKPS (300 aa). N-linked (GlcNAc...) asparagine glycans are attached at residues asparagine 75 and asparagine 94. Active-site residues include histidine 107 and histidine 109. Asparagine 161 is a glycosylation site (N-linked (GlcNAc...) asparagine). 2 disulfide bridges follow: cysteine 167-cysteine 175 and cysteine 188-cysteine 194.

This sequence belongs to the sulfotransferase 3 family. Homotrimer. Present in the hypodermis, muscle, distal tip cells (DTCs) and in neurons (at protein level).

Its subcellular location is the golgi apparatus membrane. Its function is as follows. Catalyzes the transfer of sulfate to the C2-position of selected hexuronic acid residues within the maturing heparan sulfate (HS). Involved in cell adhesion and guidance by specifically modifying proteoglycans in the extracellular matrix and on the cell surface that are essential for axon migrations. This chain is Heparan sulfate 2-O-sulfotransferase hst-2, found in Caenorhabditis elegans.